Consider the following 246-residue polypeptide: Polyhedrin (246 aa).

It belongs to the polyhedrin family.

In terms of biological role, major component of the virus occlusion bodies, which are large proteinaceous structures (polyhedra), that protect the virus from the outside environment for extended periods until they are ingested by insect larvae. This is Polyhedrin (PH) from Lepidoptera (butterflies and moths).